We begin with the raw amino-acid sequence, 510 residues long: NAD(P)H-quinone oxidoreductase subunit 2 B, chloroplastic (510 aa).

The next 13 helical transmembrane spans lie at leucine 24–leucine 44, isoleucine 57–phenylalanine 77, isoleucine 99–isoleucine 119, methionine 124–cysteine 144, leucine 149–tyrosine 169, tyrosine 183–glycine 203, proline 227–alanine 247, tryptophan 295–isoleucine 315, methionine 323–aspartate 343, tyrosine 354–leucine 374, alanine 395–phenylalanine 415, leucine 418–leucine 438, and methionine 484–isoleucine 504.

The protein belongs to the complex I subunit 2 family. In terms of assembly, NDH is composed of at least 16 different subunits, 5 of which are encoded in the nucleus.

It is found in the plastid. The protein resides in the chloroplast thylakoid membrane. The enzyme catalyses a plastoquinone + NADH + (n+1) H(+)(in) = a plastoquinol + NAD(+) + n H(+)(out). The catalysed reaction is a plastoquinone + NADPH + (n+1) H(+)(in) = a plastoquinol + NADP(+) + n H(+)(out). NDH shuttles electrons from NAD(P)H:plastoquinone, via FMN and iron-sulfur (Fe-S) centers, to quinones in the photosynthetic chain and possibly in a chloroplast respiratory chain. The immediate electron acceptor for the enzyme in this species is believed to be plastoquinone. Couples the redox reaction to proton translocation, and thus conserves the redox energy in a proton gradient. The protein is NAD(P)H-quinone oxidoreductase subunit 2 B, chloroplastic of Daucus carota (Wild carrot).